Here is a 227-residue protein sequence, read N- to C-terminus: Large ribosomal subunit protein uL1 (227 aa).

Belongs to the universal ribosomal protein uL1 family. In terms of assembly, part of the 50S ribosomal subunit.

In terms of biological role, binds directly to 23S rRNA. The L1 stalk is quite mobile in the ribosome, and is involved in E site tRNA release. Its function is as follows. Protein L1 is also a translational repressor protein, it controls the translation of the L11 operon by binding to its mRNA. This chain is Large ribosomal subunit protein uL1, found in Brevibacillus brevis (strain 47 / JCM 6285 / NBRC 100599).